Reading from the N-terminus, the 210-residue chain is Mitochondrial import receptor subunit TOM20-2 (210 aa).

Met1 is subject to N-acetylmethionine. At 1–178 (MEFSTADFER…SSKKKKRNTE (178 aa)) the chain is on the cytoplasmic side. 2 TPR repeats span residues 42-75 (LLELSQFQPIPEAKLMLNDAISKLEEALTINPGK) and 83-120 (ANAYTAHAFYVHDPEEAKEHFDKATEYFQRAENEDPGN). The segment covering 151–161 (GGGGGGGGGGM) has biased composition (gly residues). Residues 151–172 (GGGGGGGGGGMASSNVSQSSKK) form a disordered region. The helical transmembrane segment at 179 to 199 (FTYDVCGWIILACGIVAWVGM) threads the bilayer. At 200–210 (AKSLGPPPPAR) the chain is on the mitochondrial intermembrane side.

The protein belongs to the Tom20 family. As to quaternary structure, forms part of the preprotein translocase complex of the outer mitochondrial membrane (TOM complex) which consists of at least 6 different proteins (TOM5, TOM6, TOM7, TOM20, TOM22/TOM9 and TOM40). Component of a mitochondrial large protein complex that contains, at least, MIC60, DGS1, TOM40, TOM20 proteins, and petC/RISP. The N-terminus is blocked. In terms of tissue distribution, expressed in roots, flowers, young cotyledons and leaves.

It is found in the mitochondrion outer membrane. Functionally, central component of the receptor complex responsible for the recognition and translocation of cytosolically synthesized mitochondrial preproteins. Together with TOM22 functions as the transit peptide receptor at the surface of the mitochondrion outer membrane and facilitates the movement of preproteins into the translocation pore. This Arabidopsis thaliana (Mouse-ear cress) protein is Mitochondrial import receptor subunit TOM20-2.